We begin with the raw amino-acid sequence, 132 residues long: Small ribosomal subunit protein uS8 (132 aa).

It belongs to the universal ribosomal protein uS8 family. In terms of assembly, part of the 30S ribosomal subunit. Contacts proteins S5 and S12.

Its function is as follows. One of the primary rRNA binding proteins, it binds directly to 16S rRNA central domain where it helps coordinate assembly of the platform of the 30S subunit. In Gluconacetobacter diazotrophicus (strain ATCC 49037 / DSM 5601 / CCUG 37298 / CIP 103539 / LMG 7603 / PAl5), this protein is Small ribosomal subunit protein uS8.